A 156-amino-acid chain; its full sequence is Putative pre-16S rRNA nuclease (156 aa).

Belongs to the YqgF nuclease family.

It localises to the cytoplasm. Could be a nuclease involved in processing of the 5'-end of pre-16S rRNA. The sequence is that of Putative pre-16S rRNA nuclease from Nocardioides sp. (strain ATCC BAA-499 / JS614).